The sequence spans 547 residues: CAP-Gly domain-containing linker protein 3 (547 aa).

The disordered stretch occupies residues M1–A49. Residues E16 to V27 show a composition bias toward acidic residues. ANK repeat units lie at residues T117 to R158, T160 to S191, and N197 to R229. Residues G314–S356 enclose the CAP-Gly 1 domain. Residues D365–G413 are disordered. Residues P367 to T377 show a composition bias toward low complexity. T374 is subject to Phosphothreonine. Over residues G387–S399 the composition is skewed to basic residues. Residues S399 and S401 each carry the phosphoserine modification. The 43-residue stretch at G436–P478 folds into the CAP-Gly 2 domain. Positions S488 to S547 are goLD. S-palmitoyl cysteine attachment occurs at residues C534 and C535.

As to quaternary structure, homodimer. Interacts with AKT1 and AKT2; when AKT1 and AKT2 are phosphorylated and activated, affinity is higher for AKT2. Interacts with ZDHHC13 (via ANK repeats). Interacts with ZDHHC17 (via ANK repeats). In terms of processing, palmitoylation by ZDHHC17 regulates association with the plasma membrane.

It is found in the cell membrane. The protein resides in the cytoplasm. The protein localises to the golgi apparatus. Its subcellular location is the golgi stack. Functions as a cytoplasmic linker protein. Involved in TGN-endosome dynamics. May modulate the cellular compartmentalization of AKT kinase family and promote its cell membrane localization, thereby playing a role in glucose transport in adipocytes. This is CAP-Gly domain-containing linker protein 3 (Clip3) from Mus musculus (Mouse).